A 715-amino-acid chain; its full sequence is Serine/arginine repetitive matrix protein 5 (715 aa).

Low complexity predominate over residues 1–13; that stretch reads MSSPKRSSKPSMS. Positions 1 to 715 are disordered; it reads MSSPKRSSKP…RSSSSSSKLA (715 aa). A compositionally biased stretch (polar residues) spans 32–59; that stretch reads LKSTKSATPNRSLVPTKPATSRNSVMSP. The span at 60-79 shows a compositional bias: low complexity; sequence SSSKSTKSTSTKRAPSNRPS. Basic residues predominate over residues 80–90; it reads SRSRVRSKART. Polar residues predominate over residues 92-104; the sequence is SRVSTDTRTSKAS. Basic residues predominate over residues 112–136; sequence HQRRGTHSRGRTPGRRGSRSSKRSP. Composition is skewed to polar residues over residues 213 to 224 and 257 to 272; these read TPSTAKCQTPTG and YSPT…YNQA. The segment covering 273–285 has biased composition (low complexity); the sequence is STRSRPQSHSQSR. Positions 286–320 are enriched in basic residues; that stretch reads SPRRSRSGSQKRTHSRVRSHSWKRNHSRARSRTRK. Composition is skewed to basic and acidic residues over residues 359–388 and 397–521; these read PSKE…KESG and KQRD…ERDH. A compositionally biased stretch (basic residues) spans 522–536; sequence RRSRSPSKERQRRQS. Basic and acidic residues-rich tracts occupy residues 539 to 595 and 611 to 628; these read PNKE…DHSR and SSKE…KEGN. The span at 657-666 shows a compositional bias: polar residues; it reads TRTSSLSQNR. Low complexity predominate over residues 667–681; the sequence is TPSKTSSHSPSTFPS. A compositionally biased stretch (polar residues) spans 682-715; the sequence is GGQTLSQDDSQADATTSKATLPGERSSSSSSKLA.

The protein is Serine/arginine repetitive matrix protein 5 (SRRM5) of Homo sapiens (Human).